We begin with the raw amino-acid sequence, 575 residues long: Acetolactate synthase large subunit (575 aa).

Glutamate 57 contacts thiamine diphosphate. FAD contacts are provided by residues arginine 159, histidine 265–arginine 286, and aspartate 308–aspartate 327. The interval glutamine 395–serine 475 is thiamine pyrophosphate binding. Mg(2+) is bound by residues aspartate 446 and asparagine 473.

It belongs to the TPP enzyme family. In terms of assembly, dimer of large and small chains. Requires Mg(2+) as cofactor. Thiamine diphosphate is required as a cofactor.

It carries out the reaction 2 pyruvate + H(+) = (2S)-2-acetolactate + CO2. Its pathway is amino-acid biosynthesis; L-isoleucine biosynthesis; L-isoleucine from 2-oxobutanoate: step 1/4. It functions in the pathway amino-acid biosynthesis; L-valine biosynthesis; L-valine from pyruvate: step 1/4. This chain is Acetolactate synthase large subunit (ilvB), found in Lactococcus lactis subsp. lactis (strain IL1403) (Streptococcus lactis).